A 480-amino-acid chain; its full sequence is Glutarate-semialdehyde dehydrogenase (480 aa).

NADP(+) is bound by residues 156–157 (WN), 180–183 (KPAS), and 233–234 (GS). The Proton acceptor role is filled by glutamate 255. Leucine 256 is a binding site for NADP(+). The active-site Nucleophile is the cysteine 289. Glutamate 384 is a binding site for NADP(+).

Belongs to the aldehyde dehydrogenase family.

It catalyses the reaction 5-oxopentanoate + NADP(+) + H2O = glutarate + NADPH + 2 H(+). The protein operates within amino-acid degradation. Catalyzes the conversion of 5-oxopentanoate (glutarate semialdehyde) to glutarate. Involved in L-lysine degradation. This is Glutarate-semialdehyde dehydrogenase from Pseudomonas putida (strain ATCC 47054 / DSM 6125 / CFBP 8728 / NCIMB 11950 / KT2440).